Reading from the N-terminus, the 106-residue chain is MADAKVDSATEISAKDLKEKKLIEEKENGKDATNGKENEENGEPEIDDEDDDEVDEDDEEGEGDEDEDEDDDDEDLGGGTKRGADDDEDEDEDDEDDVDPKKQKVN.

Over residues 1-39 (MADAKVDSATEISAKDLKEKKLIEEKENGKDATNGKENE) the composition is skewed to basic and acidic residues. Positions 1-106 (MADAKVDSAT…DVDPKKQKVN (106 aa)) are disordered. Phosphoserine is present on Ser-8. At Thr-10 the chain carries Phosphothreonine. Composition is skewed to acidic residues over residues 40–76 (ENGEPEIDDEDDDEVDEDDEEGEGDEDEDEDDDDEDL) and 85–98 (DDDEDEDEDDEDDV).

It belongs to the pro/parathymosin family. As to expression, uniformly expressed in all embryonic cells at 4 and 8 hpf. At the 20-somite stage (18 hpf), ubiquitously expressed in the developing nervous system, in the tail bud and in the pronephric ducts. Also expressed in some placodes, including the anterior lateral line placode, otic vesicle and olfactory placode. At 27 hpf, strong expression persists in the central nervous system and the olfactory placode. Expressed strongly in the eyes and the pectoral fin buds. In the tail region, expressed in the spinal cord, in the posterior lateral line precursors, and persists in the pronephric ducts. At 48 hpf, expressed in all head territories including the developing brain, eyes, and pharyngeal arches. More caudally, expression persists in the pectoral fin buds, the spinal cord and, for the first time, appears in the intestine. At 72 hpf, expressed only in restricted regions of the brain, in pharyngeal arches region and in the amacrine cells and the horizontal cells of the retina.

Its subcellular location is the nucleus. The polypeptide is Prothymosin alpha-B (Danio rerio (Zebrafish)).